Consider the following 856-residue polypeptide: Dynamin-1 (856 aa).

One can recognise a Dynamin-type G domain in the interval aspartate 28–proline 294. The segment at glycine 38 to serine 45 is G1 motif. GDP is bound by residues serine 41, glycine 43, lysine 44, serine 45, serine 46, arginine 59, and glycine 60. Positions valine 64–arginine 66 are G2 motif. Residue tyrosine 80 is modified to Phosphotyrosine. Tyrosine 125 is subject to 3'-nitrotyrosine; alternate. Tyrosine 125 carries the post-translational modification Phosphotyrosine; alternate. Residues aspartate 136–glycine 139 form a G3 motif region. The tract at residues threonine 205 to aspartate 208 is G4 motif. Lysine 206, aspartate 208, aspartate 211, asparagine 236, arginine 237, and glutamine 239 together coordinate GDP. Residues valine 235–serine 238 form a G5 motif region. Serine 306 and serine 347 each carry phosphoserine. Tyrosine 354 is modified (phosphotyrosine). At serine 512 the chain carries Phosphoserine. In terms of domain architecture, PH spans leucine 519–valine 625. Positions valine 659–valine 750 constitute a GED domain. A disordered region spans residues valine 750 to serine 856. Residues leucine 763–proline 781 show a composition bias toward polar residues. Phosphoserine occurs at positions 774 and 778. Arginine 796 carries the post-translational modification Omega-N-methylarginine. Phosphoserine is present on serine 822. Residues proline 825–proline 844 show a composition bias toward pro residues.

It belongs to the TRAFAC class dynamin-like GTPase superfamily. Dynamin/Fzo/YdjA family. As to quaternary structure, homodimer; homodimerization is mediated by the dynamin-type G domain which promotes assembly-stimulated GTPase activity. Homo-tetramer formed from two dimers in the absence of lipid. Oligomerizes into a helical polymer that self-assembles around the vesicle membrane, when associated to the menbrane through lipid binding. Interacts (via C-terminal proline-rich domain (PRD)) with SNX9 (via SH3 domain); this interaction allows regulation of DNM1 self-assembly during late stages of endocytic vesicle formation and supports DNM1's early functions in accelerating clathrin-coated pits (CCPs) maturation in non neuronals cell. Interacts (via C-terminal proline-rich domain (PRD)) with MYO1E (via SH3 domain); this interaction regulates receptor-mediated endocytosis. Interacts with SNX33 (via SH3 domain); this interaction decreases DNM1-dependent endocytosis. Interacts with DIAPH1. Interacts with GRB2 (via SH3 domain); this interaction mediates disassembly of DNM1 polymers, therefore modulates self-assembly. Forms a complex with BIN1 (via SH3 domain) and SH3GL2 (via SH3 domain). Forms a complex with SH3GL2 (via SH3 domain) and AMPH (via SH3 domain). Forms a complex with SH3GL2 (via SH3 domain) and SYNJ1. Interacts with AMPH. Interacts (via C-terminal proline-rich domain (PRD)) with SYT1; this interaction facilitates vesicle fission during clathrin-mediated endocytosis (CME). Interacts (via C-terminal proline-rich domain (PRD)) with PLCG1 (via SH3 domain); this interaction stimulates the release of GDP from DNM1 and enhances DNM1-dependent endocytosis. Interacts with SNPH; this interaction inhibits the binding of DNM1 to AMPH and DNM1-receptor-mediated endocytosis. Interacts with CAV1. Interacts with SH3GLB1 (via SH3 domain). Interacts with PACSIN1 (via SH3 domain), PACSIN2 (via SH3 domain) and PACSIN3 (via SH3 domain). Interacts with UNC119; this interaction decreases DNM1's GTPase activity and affects DNM1's interaction with AMPH. Interacts with AMPH. Interacts (GTP-bound form) with DNAJC6; this interaction allows clathrin-coated vesicle (CCV) formation at the plasma membrane. Phosphorylation at Ser-774 by GSK3B/GSK3-beta leads to inactivation of receptor-mediated endocytosis in non-neuronal cells. Dephosphorylation at Ser-774, through the EGFR downstream signaling, leads to activation and regulates early stages of clathrin-mediated endocytosis (CME).

It localises to the cell membrane. The protein resides in the membrane. The protein localises to the clathrin-coated pit. Its subcellular location is the cytoplasmic vesicle. It is found in the presynapse. It localises to the secretory vesicle. The protein resides in the chromaffin granule. The enzyme catalyses GTP + H2O = GDP + phosphate + H(+). Catalyzes the hydrolysis of GTP and utilizes this energy to mediate vesicle scission and participates in many forms of endocytosis, such as clathrin-mediated endocytosis or synaptic vesicle endocytosis as well as rapid endocytosis (RE). Associates to the membrane, through lipid binding, and self-assembles into rings and stacks of interconnected rings through oligomerization to form a helical polymer around the vesicle membrane leading to constriction of invaginated coated pits around their necks. Self-assembly of the helical polymer induces membrane tubules narrowing until the polymer reaches a length sufficient to trigger GTP hydrolysis. Depending on the curvature imposed on the tubules, membrane detachment from the helical polymer upon GTP hydrolysis can cause spontaneous hemifission followed by complete fission. May play a role in regulating early stages of clathrin-mediated endocytosis in non-neuronal cells through its activation by dephosphorylation via the signaling downstream of EGFR. Controls vesicle size at a step before fission, during formation of membrane pits, at hippocampal synapses. Controls plastic adaptation of the synaptic vesicle recycling machinery to high levels of activity. Mediates rapid endocytosis (RE), a Ca(2+)-dependent and clathrin- and K(+)-independent process in chromaffin cells. Microtubule-associated force-producing protein involved in producing microtubule bundles and able to bind and hydrolyze GTP. Through its interaction with DNAJC6, acts during the early steps of clathrin-coated vesicle (CCV) formation. The protein is Dynamin-1 of Bos taurus (Bovine).